The primary structure comprises 310 residues: Sporozoite surface protein P36 (310 aa).

A signal peptide spans 1-24 (MRKALYSLLFYMCICLYIYTPVFM). 6-Cys domains are found at residues 25 to 157 (ANLK…IKKT) and 168 to 309 (YIKG…STKA). 6 disulfide bridges follow: Cys-38–Cys-48, Cys-62–Cys-137, Cys-80–Cys-135, Cys-172–Cys-196, Cys-210–Cys-291, and Cys-227–Cys-289. 3 N-linked (GlcNAc...) asparagine glycosylation sites follow: Asn-72, Asn-114, and Asn-118. A glycan (N-linked (GlcNAc...) asparagine) is linked at Asn-290.

It is found in the cell surface. The protein localises to the cell membrane. Functionally, involved in sporozoite infection of hepatocytes and replication therein. This chain is Sporozoite surface protein P36 (P36), found in Plasmodium yoelii yoelii.